A 64-amino-acid chain; its full sequence is uncharacterized protein (64 aa).

An N-terminal signal peptide occupies residues 1–26 (MVVKENFCGACLTIPLAFAGAGTAIG). Residues 33–53 (IKKWSIVITIISLLLTVWFIY) traverse the membrane as a helical segment.

It belongs to the IIV-6 010R family.

The protein localises to the host membrane. This is an uncharacterized protein from Aedes vexans (Inland floodwater mosquito).